A 231-amino-acid chain; its full sequence is 2-C-methyl-D-erythritol 4-phosphate cytidylyltransferase (231 aa).

The protein belongs to the IspD/TarI cytidylyltransferase family. IspD subfamily.

It carries out the reaction 2-C-methyl-D-erythritol 4-phosphate + CTP + H(+) = 4-CDP-2-C-methyl-D-erythritol + diphosphate. Its pathway is isoprenoid biosynthesis; isopentenyl diphosphate biosynthesis via DXP pathway; isopentenyl diphosphate from 1-deoxy-D-xylulose 5-phosphate: step 2/6. Functionally, catalyzes the formation of 4-diphosphocytidyl-2-C-methyl-D-erythritol from CTP and 2-C-methyl-D-erythritol 4-phosphate (MEP). This is 2-C-methyl-D-erythritol 4-phosphate cytidylyltransferase from Fusobacterium nucleatum subsp. nucleatum (strain ATCC 25586 / DSM 15643 / BCRC 10681 / CIP 101130 / JCM 8532 / KCTC 2640 / LMG 13131 / VPI 4355).